The following is a 187-amino-acid chain: Potassium-transporting ATPase KdpC subunit (187 aa).

A helical membrane pass occupies residues 11–31 (LILLMTVVTGALYPLAVTGIA).

Belongs to the KdpC family. In terms of assembly, the system is composed of three essential subunits: KdpA, KdpB and KdpC.

It localises to the cell inner membrane. Its function is as follows. Part of the high-affinity ATP-driven potassium transport (or Kdp) system, which catalyzes the hydrolysis of ATP coupled with the electrogenic transport of potassium into the cytoplasm. This subunit acts as a catalytic chaperone that increases the ATP-binding affinity of the ATP-hydrolyzing subunit KdpB by the formation of a transient KdpB/KdpC/ATP ternary complex. This Pseudomonas entomophila (strain L48) protein is Potassium-transporting ATPase KdpC subunit.